The chain runs to 267 residues: Cytochrome b (267 aa).

4 helical membrane passes run 33–53 (FGSL…FLAM), 77–98 (WLIR…FIHV), 113–133 (WNIG…GYVL), and 178–198 (FFAF…VHLL). Positions 83 and 97 each coordinate heme b. Residues histidine 182 and histidine 196 each coordinate heme b. Histidine 201 serves as a coordination point for a ubiquinone. The chain crosses the membrane as a helical span at residues 226-246 (IKDLLGVILLLMVLMILVLFF).

This sequence belongs to the cytochrome b family. As to quaternary structure, the cytochrome bc1 complex contains 11 subunits: 3 respiratory subunits (MT-CYB, CYC1 and UQCRFS1), 2 core proteins (UQCRC1 and UQCRC2) and 6 low-molecular weight proteins (UQCRH/QCR6, UQCRB/QCR7, UQCRQ/QCR8, UQCR10/QCR9, UQCR11/QCR10 and a cleavage product of UQCRFS1). This cytochrome bc1 complex then forms a dimer. It depends on heme b as a cofactor.

It is found in the mitochondrion inner membrane. In terms of biological role, component of the ubiquinol-cytochrome c reductase complex (complex III or cytochrome b-c1 complex) that is part of the mitochondrial respiratory chain. The b-c1 complex mediates electron transfer from ubiquinol to cytochrome c. Contributes to the generation of a proton gradient across the mitochondrial membrane that is then used for ATP synthesis. The polypeptide is Cytochrome b (MT-CYB) (Abrothrix olivaceus (Olive grass mouse)).